Consider the following 129-residue polypeptide: Snaclec coagulation factor IX/factor X-binding protein subunit B3 (129 aa).

An N-terminal signal peptide occupies residues 1–8 (LSLSGTAA). 3 disulfide bridges follow: Cys-10/Cys-21, Cys-38/Cys-127, and Cys-104/Cys-119. The C-type lectin domain occupies 17 to 128 (YEGHCYKPFN…CRMMANFVCE (112 aa)).

It belongs to the snaclec family. In terms of assembly, heterodimer of subunits A and B3; disulfide-linked. Expressed by the venom gland.

Its subcellular location is the secreted. Its function is as follows. Anticoagulant protein which binds to the gamma-carboxyglutamic acid-domain regions of factors IX (F9) and factor X (F10) in the presence of calcium with a 1 to 1 stoichiometry. The chain is Snaclec coagulation factor IX/factor X-binding protein subunit B3 from Trimeresurus stejnegeri (Chinese green tree viper).